Reading from the N-terminus, the 88-residue chain is Small ribosomal subunit protein bS20 (88 aa).

The disordered stretch occupies residues 1 to 33 (MANTSSAKKATRKIARRTAVNKSRRTQMRGSVR).

It belongs to the bacterial ribosomal protein bS20 family.

Its function is as follows. Binds directly to 16S ribosomal RNA. The sequence is that of Small ribosomal subunit protein bS20 from Rhodopseudomonas palustris (strain BisB5).